The chain runs to 60 residues: Temporin-CG2 (60 aa).

Residues 1-22 (MFTLKKPLLVLFFLATINLSLC) form the signal peptide. Positions 23-43 (EQERNAEEERRDDDERNVEVE) are cleaved as a propeptide — removed in mature form.

Expressed by the skin glands.

It localises to the secreted. In terms of biological role, antimicrobial peptide active against a variety of Gram-positive bacterial strains but not against Gram-negative bacteria. Has weak antifungal activity against a slime mold isolate. Has weak hemolytic activity against human erythrocytes. This chain is Temporin-CG2, found in Amolops chunganensis (Chungan torrent frog).